The following is a 206-amino-acid chain: High frequency lysogenization protein HflD homolog (206 aa).

The protein belongs to the HflD family.

The protein resides in the cytoplasm. The protein localises to the cell inner membrane. The protein is High frequency lysogenization protein HflD homolog of Pseudomonas paraeruginosa (strain DSM 24068 / PA7) (Pseudomonas aeruginosa (strain PA7)).